The following is a 64-amino-acid chain: Large ribosomal subunit protein uL29 (64 aa).

It belongs to the universal ribosomal protein uL29 family.

This Lacticaseibacillus paracasei (strain ATCC 334 / BCRC 17002 / CCUG 31169 / CIP 107868 / KCTC 3260 / NRRL B-441) (Lactobacillus paracasei) protein is Large ribosomal subunit protein uL29.